The chain runs to 758 residues: Aspartyl/asparaginyl beta-hydroxylase (758 aa).

Residues 1–46 (MAQRKNAKSSGNSSSSGSGSGSTSAGSSSPGARRETKHGGHKNGRK) form a disordered region. At 1–53 (MAQRKNAKSSGNSSSSGSGSGSTSAGSSSPGARRETKHGGHKNGRKGGLSGTS) the chain is on the cytoplasmic side. A compositionally biased stretch (low complexity) spans 9 to 31 (SSGNSSSSGSGSGSTSAGSSSPG). The residue at position 14 (Ser-14) is a Phosphoserine. A helical; Signal-anchor for type II membrane protein membrane pass occupies residues 54-74 (FFTWFMVIALLGVWTSVAVVW). Leu-64 is a glycosylation site (N-linked (GlcNAc...) asparagine). Residues 75–758 (FDLVDYEEVL…PQQRRSLPAI (684 aa)) are Lumenal-facing. Ca(2+)-binding residues include Asp-91, Asp-93, Asp-95, Asp-97, and Asp-102. 2 disordered regions span residues 111–140 (ERST…EAEP) and 304–324 (EEQQ…EQKA). Basic and acidic residues predominate over residues 313 to 324 (TNRKTDDPEQKA). The TPR 1 repeat unit spans residues 341-374 (IKAELDAAEKLRKRGKIEEAVNAFKELVRKYPQS). N-linked (GlcNAc...) asparagine glycosylation is present at Asn-452. TPR repeat units lie at residues 454–487 (TSLK…TPND), 489–521 (FAKV…GDPG), and 525–557 (GRFY…GHFA). Trp-625 serves as a coordination point for 2-oxoglutarate. A disulfide bond links Cys-641 and Cys-648. Residue Ser-668 participates in 2-oxoglutarate binding. Fe cation is bound at residue His-679. 688-690 (RMH) lines the 2-oxoglutarate pocket. Residue Asn-706 is glycosylated (N-linked (GlcNAc...) asparagine). His-725 lines the Fe cation pocket. Residue Arg-735 coordinates 2-oxoglutarate.

This sequence belongs to the aspartyl/asparaginyl beta-hydroxylase family. Monomer. Isoform 8 interacts with ORAI1 and STIM1. Isoform 4 interacts with CASQ2. It depends on Fe cation as a cofactor. In terms of tissue distribution, isoform 1 is detected in all tissues tested. Isoform 8 is mainly expressed in pancreas, heart, brain, kidney and liver. Isoform 8 is expressed in kidney (at protein level).

Its subcellular location is the endoplasmic reticulum membrane. The protein localises to the sarcoplasmic reticulum membrane. It carries out the reaction L-aspartyl-[protein] + 2-oxoglutarate + O2 = 3-hydroxy-L-aspartyl-[protein] + succinate + CO2. In terms of biological role, specifically hydroxylates an Asp or Asn residue in certain epidermal growth factor-like (EGF) domains of a number of proteins. Functionally, membrane-bound Ca(2+)-sensing protein, which is a structural component of the ER-plasma membrane junctions. Isoform 8 regulates the activity of Ca(+2) released-activated Ca(+2) (CRAC) channels in T-cells. This is Aspartyl/asparaginyl beta-hydroxylase (ASPH) from Homo sapiens (Human).